The chain runs to 277 residues: Protein RKD3 (277 aa).

In terms of domain architecture, RWP-RK spans 142–226 (KRIIMKRRYR…LGNTKGRTPK (85 aa)). Positions 201 to 246 (RKLTSLNALIANLKDLLGNTKGRTPKSKLRNALELLEMEKKMIEEV) form a coiled coil.

It is found in the nucleus. Functionally, putative transcription factor. This chain is Protein RKD3 (RKD3), found in Arabidopsis thaliana (Mouse-ear cress).